Here is a 136-residue protein sequence, read N- to C-terminus: Large ribosomal subunit protein eL27 (136 aa).

Residues 5–40 (MKPGKVVMVLAGRYAGRKAVIVKNIDDGTADRPYSH) form the KOW domain.

It belongs to the eukaryotic ribosomal protein eL27 family. In terms of assembly, component of the large ribosomal subunit.

It localises to the cytoplasm. The protein resides in the cytosol. The protein localises to the rough endoplasmic reticulum. Component of the large ribosomal subunit. The protein is Large ribosomal subunit protein eL27 (rpl27) of Hippocampus comes (Tiger tail seahorse).